The following is a 369-amino-acid chain: GDSL esterase/lipase At5g41890 (369 aa).

Serine 32 acts as the Nucleophile in catalysis. Catalysis depends on residues aspartate 334 and histidine 337.

This sequence belongs to the 'GDSL' lipolytic enzyme family.

In Arabidopsis thaliana (Mouse-ear cress), this protein is GDSL esterase/lipase At5g41890.